The primary structure comprises 375 residues: Putrescine N-methyltransferase 1 (375 aa).

Polar residues-rich tracts occupy residues 24 to 50 (HQNGTSEHLNGYQNGTSKHQNGHQNGT) and 57 to 77 (HQNGTSEQQNGTISHDNGNEL). A disordered region spans residues 24-77 (HQNGTSEHLNGYQNGTSKHQNGHQNGTFEHRNGHQNGTSEQQNGTISHDNGNEL). Residues 86-323 (PGWFSEFSAL…GVIGYMLCST (238 aa)) enclose the PABS domain. Residues glutamine 117, glutamate 192, and 223–224 (DG) each bind S-adenosyl-L-methionine. Aspartate 242 acts as the Proton acceptor in catalysis. Tyrosine 311 serves as a coordination point for S-adenosyl-L-methionine.

The protein belongs to the class I-like SAM-binding methyltransferase superfamily. Putrescine methyltransferase family. As to expression, predominantly expressed in roots.

It carries out the reaction putrescine + S-adenosyl-L-methionine = N-methylputrescine + S-adenosyl-L-homocysteine + H(+). The protein operates within alkaloid biosynthesis; nicotine biosynthesis. Functionally, involved in the biosynthesis of pyridine alkaloid natural products, leading mainly to the production of anabasine, anatabine, nicotine and nornicotine, effective deterrents against herbivores with antiparasitic and pesticide properties (neurotoxins); nornicotine serves as the precursor in the synthesis of the carcinogen compound N'-nitrosonornicotine (NNN). Methyltransferase that mediates the conversion of putrescine to N-methylputrescine. Promotes leaves ripening. This Nicotiana tabacum (Common tobacco) protein is Putrescine N-methyltransferase 1.